The following is a 449-amino-acid chain: Asparagine--tRNA ligase (449 aa).

This sequence belongs to the class-II aminoacyl-tRNA synthetase family. In terms of assembly, homodimer.

It is found in the cytoplasm. The enzyme catalyses tRNA(Asn) + L-asparagine + ATP = L-asparaginyl-tRNA(Asn) + AMP + diphosphate + H(+). This is Asparagine--tRNA ligase from Mesomycoplasma hyopneumoniae (strain 7448) (Mycoplasma hyopneumoniae).